A 249-amino-acid polypeptide reads, in one-letter code: Triosephosphate isomerase (249 aa).

9–11 (NWK) serves as a coordination point for substrate. The active-site Electrophile is the H94. Catalysis depends on E166, which acts as the Proton acceptor. Residues G172, S211, and 232-233 (GG) contribute to the substrate site.

Belongs to the triosephosphate isomerase family. As to quaternary structure, homodimer.

The protein localises to the cytoplasm. The enzyme catalyses D-glyceraldehyde 3-phosphate = dihydroxyacetone phosphate. Its pathway is carbohydrate biosynthesis; gluconeogenesis. It participates in carbohydrate degradation; glycolysis; D-glyceraldehyde 3-phosphate from glycerone phosphate: step 1/1. In terms of biological role, involved in the gluconeogenesis. Catalyzes stereospecifically the conversion of dihydroxyacetone phosphate (DHAP) to D-glyceraldehyde-3-phosphate (G3P). The protein is Triosephosphate isomerase of Chromohalobacter salexigens (strain ATCC BAA-138 / DSM 3043 / CIP 106854 / NCIMB 13768 / 1H11).